The following is a 131-amino-acid chain: Small ribosomal subunit protein uS8 (131 aa).

Belongs to the universal ribosomal protein uS8 family. Part of the 30S ribosomal subunit. Contacts proteins S5 and S12.

One of the primary rRNA binding proteins, it binds directly to 16S rRNA central domain where it helps coordinate assembly of the platform of the 30S subunit. This Ruthia magnifica subsp. Calyptogena magnifica protein is Small ribosomal subunit protein uS8.